Here is a 140-residue protein sequence, read N- to C-terminus: Ribonuclease P protein component (140 aa).

The protein belongs to the RnpA family. Consists of a catalytic RNA component (M1 or rnpB) and a protein subunit.

The enzyme catalyses Endonucleolytic cleavage of RNA, removing 5'-extranucleotides from tRNA precursor.. Its function is as follows. RNaseP catalyzes the removal of the 5'-leader sequence from pre-tRNA to produce the mature 5'-terminus. It can also cleave other RNA substrates such as 4.5S RNA. The protein component plays an auxiliary but essential role in vivo by binding to the 5'-leader sequence and broadening the substrate specificity of the ribozyme. The protein is Ribonuclease P protein component of Nostoc sp. (strain PCC 7120 / SAG 25.82 / UTEX 2576).